Here is a 240-residue protein sequence, read N- to C-terminus: Cilia- and flagella-associated protein 77 (240 aa).

Belongs to the CFAP77 family.

The protein localises to the cytoplasm. It is found in the cytoskeleton. Its subcellular location is the cilium axoneme. It localises to the flagellum axoneme. In terms of biological role, microtubule inner protein (MIP) part of the dynein-decorated doublet microtubules (DMTs) in cilia axoneme, which is required for motile cilia beating. The polypeptide is Cilia- and flagella-associated protein 77 (Danio rerio (Zebrafish)).